We begin with the raw amino-acid sequence, 131 residues long: MALWVTAVLALACLGGLATPGPVRRSTSPPVALRELIEELSNITQDQKTSLCNSSMVWSVDLTAGGFCAALESLTNISSCNAIHRTQRILNGLCNQKASDVASSPPDTKIEVAQFISKLLNYSKQLFRYGH.

The N-terminal stretch at 1–18 is a signal peptide; the sequence is MALWVTAVLALACLGGLA. N-linked (GlcNAc...) asparagine glycosylation is found at Asn-42, Asn-53, Asn-76, and Asn-121. Intrachain disulfides connect Cys-52–Cys-80 and Cys-68–Cys-94.

It belongs to the IL-4/IL-13 family. Interacts with IL13RA2.

The protein localises to the secreted. Its function is as follows. Cytokine that plays important roles in allergic inflammation and immune response to parasite infection. Synergizes with IL2 in regulating interferon-gamma synthesis. Stimulates B-cell proliferation, and activation of eosinophils, basophils, and mast cells. Plays an important role in controlling IL33 activity by modulating the production of transmembrane and soluble forms of interleukin-1 receptor-like 1/IL1RL1. Displays the capacity to antagonize Th1-driven proinflammatory immune response and downregulates synthesis of many proinflammatory cytokines including IL1, IL6, IL10, IL12 and TNF-alpha through a mechanism that partially involves suppression of NF-kappa-B. Also functions on nonhematopoietic cells, including endothelial cells where it induces vascular cell adhesion protein 1/VCAM1, which is important in the recruitment of eosinophils. Exerts its biological effects through its receptors which comprises the IL4R chain and the IL13RA1 chain, to activate JAK1 and TYK2, leading to the activation of STAT6. Aside from IL13RA1, another receptor IL13RA2 acts as a high affinity decoy for IL13 and mediates internalization and depletion of extracellular IL13. This chain is Interleukin-13 (Il13), found in Rattus norvegicus (Rat).